The sequence spans 140 residues: Nucleoside diphosphate kinase (140 aa).

ATP contacts are provided by Lys11, Phe59, Arg87, Thr93, Arg104, and Asn114. Residue His117 is the Pros-phosphohistidine intermediate of the active site.

It belongs to the NDK family. Homotetramer. Mg(2+) is required as a cofactor.

The protein resides in the cytoplasm. It catalyses the reaction a 2'-deoxyribonucleoside 5'-diphosphate + ATP = a 2'-deoxyribonucleoside 5'-triphosphate + ADP. The catalysed reaction is a ribonucleoside 5'-diphosphate + ATP = a ribonucleoside 5'-triphosphate + ADP. Major role in the synthesis of nucleoside triphosphates other than ATP. The ATP gamma phosphate is transferred to the NDP beta phosphate via a ping-pong mechanism, using a phosphorylated active-site intermediate. The protein is Nucleoside diphosphate kinase of Rickettsia felis (strain ATCC VR-1525 / URRWXCal2) (Rickettsia azadi).